The chain runs to 251 residues: 1-(5-phosphoribosyl)-5-[(5-phosphoribosylamino)methylideneamino] imidazole-4-carboxamide isomerase (251 aa).

D8 acts as the Proton acceptor in catalysis. D131 (proton donor) is an active-site residue.

The protein belongs to the HisA/HisF family.

It localises to the cytoplasm. It catalyses the reaction 1-(5-phospho-beta-D-ribosyl)-5-[(5-phospho-beta-D-ribosylamino)methylideneamino]imidazole-4-carboxamide = 5-[(5-phospho-1-deoxy-D-ribulos-1-ylimino)methylamino]-1-(5-phospho-beta-D-ribosyl)imidazole-4-carboxamide. The protein operates within amino-acid biosynthesis; L-histidine biosynthesis; L-histidine from 5-phospho-alpha-D-ribose 1-diphosphate: step 4/9. The protein is 1-(5-phosphoribosyl)-5-[(5-phosphoribosylamino)methylideneamino] imidazole-4-carboxamide isomerase of Burkholderia cenocepacia (strain ATCC BAA-245 / DSM 16553 / LMG 16656 / NCTC 13227 / J2315 / CF5610) (Burkholderia cepacia (strain J2315)).